Consider the following 71-residue polypeptide: Pro-MCH (71 aa).

A signal peptide spans 1 to 20; sequence AKMNLSSYILILTFSLFSQG.

This sequence belongs to the melanin-concentrating hormone family.

The protein resides in the secreted. The chain is Pro-MCH (PMCH) from Hylobates lar (Lar gibbon).